The chain runs to 441 residues: ATP-dependent protease ATPase subunit HslU (441 aa).

ATP contacts are provided by residues isoleucine 18, 60-65 (GVGKTE), aspartate 254, glutamate 319, and arginine 391.

It belongs to the ClpX chaperone family. HslU subfamily. In terms of assembly, a double ring-shaped homohexamer of HslV is capped on each side by a ring-shaped HslU homohexamer. The assembly of the HslU/HslV complex is dependent on binding of ATP.

It is found in the cytoplasm. In terms of biological role, ATPase subunit of a proteasome-like degradation complex; this subunit has chaperone activity. The binding of ATP and its subsequent hydrolysis by HslU are essential for unfolding of protein substrates subsequently hydrolyzed by HslV. HslU recognizes the N-terminal part of its protein substrates and unfolds these before they are guided to HslV for hydrolysis. The chain is ATP-dependent protease ATPase subunit HslU from Actinobacillus succinogenes (strain ATCC 55618 / DSM 22257 / CCUG 43843 / 130Z).